Here is a 470-residue protein sequence, read N- to C-terminus: 6-phospho-beta-galactosidase (470 aa).

D-galactose 6-phosphate contacts are provided by glutamine 19, histidine 116, asparagine 159, glutamate 160, and asparagine 297. Glutamate 160 acts as the Proton donor in catalysis. Glutamate 375 (nucleophile) is an active-site residue. The D-galactose 6-phosphate site is built by serine 430, tryptophan 431, lysine 437, and tyrosine 439.

Belongs to the glycosyl hydrolase 1 family.

The catalysed reaction is a 6-phospho-beta-D-galactoside + H2O = D-galactose 6-phosphate + an alcohol. It participates in carbohydrate metabolism; lactose degradation; D-galactose 6-phosphate and beta-D-glucose from lactose 6-phosphate: step 1/1. The protein is 6-phospho-beta-galactosidase of Staphylococcus aureus (strain Mu3 / ATCC 700698).